Reading from the N-terminus, the 263-residue chain is Type II restriction enzyme TaqI (263 aa).

In terms of processing, only 15% of purified enzyme (upon expression in E.coli) can be sequenced, suggesting the remainder has a blocked N-terminus.

The enzyme catalyses Endonucleolytic cleavage of DNA to give specific double-stranded fragments with terminal 5'-phosphates.. A P subtype restriction enzyme that recognizes the double-stranded sequence 5'-TCGA-3' and cleaves after T-1. The sequence is that of Type II restriction enzyme TaqI (taqIR) from Thermus aquaticus.